The sequence spans 230 residues: Thymidylate kinase (230 aa).

An ATP-binding site is contributed by 20 to 27 (GGEGSGKS).

It belongs to the thymidylate kinase family.

The catalysed reaction is dTMP + ATP = dTDP + ADP. Functionally, phosphorylation of dTMP to form dTDP in both de novo and salvage pathways of dTTP synthesis. This chain is Thymidylate kinase, found in Nitrobacter hamburgensis (strain DSM 10229 / NCIMB 13809 / X14).